A 263-amino-acid chain; its full sequence is 4-hydroxy-tetrahydrodipicolinate reductase (263 aa).

10–15 (GASGKM) contacts NAD(+). NADP(+) is bound at residue Arg38. NAD(+)-binding positions include 97-99 (GTT) and 123-126 (APNF). His153 serves as the catalytic Proton donor/acceptor. His154 contacts (S)-2,3,4,5-tetrahydrodipicolinate. Lys157 (proton donor) is an active-site residue. Residue 163-164 (GT) participates in (S)-2,3,4,5-tetrahydrodipicolinate binding.

Belongs to the DapB family.

The protein resides in the cytoplasm. It catalyses the reaction (S)-2,3,4,5-tetrahydrodipicolinate + NAD(+) + H2O = (2S,4S)-4-hydroxy-2,3,4,5-tetrahydrodipicolinate + NADH + H(+). The catalysed reaction is (S)-2,3,4,5-tetrahydrodipicolinate + NADP(+) + H2O = (2S,4S)-4-hydroxy-2,3,4,5-tetrahydrodipicolinate + NADPH + H(+). Its pathway is amino-acid biosynthesis; L-lysine biosynthesis via DAP pathway; (S)-tetrahydrodipicolinate from L-aspartate: step 4/4. Catalyzes the conversion of 4-hydroxy-tetrahydrodipicolinate (HTPA) to tetrahydrodipicolinate. In Dehalococcoides mccartyi (strain ATCC BAA-2266 / KCTC 15142 / 195) (Dehalococcoides ethenogenes (strain 195)), this protein is 4-hydroxy-tetrahydrodipicolinate reductase.